The chain runs to 542 residues: uncharacterized protein (542 aa).

5 consecutive transmembrane segments (helical) span residues 4 to 23, 28 to 47, 57 to 79, 86 to 108, and 151 to 173; these read ILRDNPLLLLFIVAGIGYPL, IGGIHLGVAAVLFVGLAFGA, IVYQFGLALFVYCVGLSSGHGFL, GVIYNLLTLGVILLAAALLLIPH, and PVVGYSIAYPASVLGVILAIYLA. RCK C-terminal domains follow at residues 186-270 and 273-356; these read RTLK…VIGC and EVQA…LGDS. A run of 6 helical transmembrane segments spans residues 365–384, 389–408, 415–437, 457–479, 484–506, and 519–541; these read IAVLGLGMALGIGLGLVPIP, ITVRLGLAGGPLIVALFLGA, LVWVLPYSANMLLRQMGLTIFLA, WAILGASAAIIVLLSWVMLYVGY, IPMGLLTGMVAGMQTQSATLGFA, and YAMVYPMAMVVKIVLAPVIIAVL.

The protein belongs to the AAE transporter (TC 2.A.81) family.

It is found in the cell membrane. This is an uncharacterized protein from Symbiobacterium thermophilum (strain DSM 24528 / JCM 14929 / IAM 14863 / T).